Consider the following 251-residue polypeptide: Ditrans,polycis-undecaprenyl-diphosphate synthase ((2E,6E)-farnesyl-diphosphate specific) (251 aa).

Residue Asp19 is part of the active site. Position 19 (Asp19) interacts with Mg(2+). Substrate is bound by residues 20-23 (GNNR), Trp24, His36, and 64-66 (SSE). Asn67 functions as the Proton acceptor in the catalytic mechanism. Substrate-binding positions include Trp68, Arg70, Arg187, and 193-195 (RIS). Glu206 contacts Mg(2+).

The protein belongs to the UPP synthase family. As to quaternary structure, homodimer. Requires Mg(2+) as cofactor.

The enzyme catalyses 8 isopentenyl diphosphate + (2E,6E)-farnesyl diphosphate = di-trans,octa-cis-undecaprenyl diphosphate + 8 diphosphate. Catalyzes the sequential condensation of isopentenyl diphosphate (IPP) with (2E,6E)-farnesyl diphosphate (E,E-FPP) to yield (2Z,6Z,10Z,14Z,18Z,22Z,26Z,30Z,34E,38E)-undecaprenyl diphosphate (di-trans,octa-cis-UPP). UPP is the precursor of glycosyl carrier lipid in the biosynthesis of bacterial cell wall polysaccharide components such as peptidoglycan and lipopolysaccharide. The chain is Ditrans,polycis-undecaprenyl-diphosphate synthase ((2E,6E)-farnesyl-diphosphate specific) from Pseudomonas aeruginosa (strain ATCC 15692 / DSM 22644 / CIP 104116 / JCM 14847 / LMG 12228 / 1C / PRS 101 / PAO1).